The chain runs to 222 residues: MRGKFIVVEGLEGAGKSSVIGLIVKALTDAGMRVEQTREPGGTPMAEAIRECVKHDWDETVSEETELLLMYAARVQLLTNKIYPSLNAGAWVVGDRHDLSSQAYQGGGRGVSEKTMTAISDIALNGFKPDLTLYLDVDPAVGLERARGRGELDRIEQAGLGFFERTRARYLSLAENDESIIVVNAMQPMEQVHQDVISIIANYVSQHIDEGSESHKTDQGNN.

10-17 contacts ATP; the sequence is GLEGAGKS.

Belongs to the thymidylate kinase family.

The catalysed reaction is dTMP + ATP = dTDP + ADP. Functionally, phosphorylation of dTMP to form dTDP in both de novo and salvage pathways of dTTP synthesis. This is Thymidylate kinase from Alteromonas mediterranea (strain DSM 17117 / CIP 110805 / LMG 28347 / Deep ecotype).